Consider the following 378-residue polypeptide: Glutamate 5-kinase (378 aa).

Lys19 contributes to the ATP binding site. Substrate contacts are provided by Ser59, Asp146, and Asn158. ATP contacts are provided by residues 178–179 and 220–226; these read TD and TGGMATK. Positions 285–363 constitute a PUA domain; it reads QGQIQVDAGA…GEIGEILGYK (79 aa).

Belongs to the glutamate 5-kinase family.

The protein resides in the cytoplasm. The enzyme catalyses L-glutamate + ATP = L-glutamyl 5-phosphate + ADP. It functions in the pathway amino-acid biosynthesis; L-proline biosynthesis; L-glutamate 5-semialdehyde from L-glutamate: step 1/2. Functionally, catalyzes the transfer of a phosphate group to glutamate to form L-glutamate 5-phosphate. This Moorella thermoacetica (strain ATCC 39073 / JCM 9320) protein is Glutamate 5-kinase.